The chain runs to 752 residues: Myotubularin-related protein 10 (752 aa).

One can recognise a Myotubularin phosphatase domain in the interval Phe-206–Phe-636. Residues Thr-652–Thr-683 are a coiled coil.

It belongs to the protein-tyrosine phosphatase family. Non-receptor class myotubularin subfamily.

In Danio rerio (Zebrafish), this protein is Myotubularin-related protein 10 (mtmr10).